We begin with the raw amino-acid sequence, 559 residues long: Pentatricopeptide repeat-containing protein At2g42920, chloroplastic (559 aa).

The transit peptide at 1-14 directs the protein to the chloroplast; that stretch reads MSPTILSFSGVTVP. PPR repeat units lie at residues 88–122, 125–159, 160–190, 191–221, 222–256, 257–291, 292–322, 323–357, 358–388, and 394–424; these read NPFV…SPSV, QRLT…GLED, DSFI…MIGF, DVVA…MPQR, NGVS…DVKP, DGFT…RFEL, NSIV…APKK, QLSC…GLEP, DSVS…MKEK, and SIKH…MPVE. The type E motif stretch occupies residues 429-504; that stretch reads IWSSLLSACR…EVGCSSIEVD (76 aa). Residues 505-535 form a type E(+) motif region; sequence FEVHEFISCGGTHPKSAEIYSLLDILNWDVS.

Belongs to the PPR family. PCMP-E subfamily.

Its subcellular location is the plastid. It is found in the chloroplast. This Arabidopsis thaliana (Mouse-ear cress) protein is Pentatricopeptide repeat-containing protein At2g42920, chloroplastic (PCMP-E75).